The chain runs to 145 residues: Zinc finger C2H2 protein ECU06_1150 (145 aa).

The C2H2-type 1; atypical zinc finger occupies 35–57 (KDCARYGEAQASKHALLAHARRH). Residues 63-85 (FECHLCGKDYTRSDPLKKHLLRH) form a C2H2-type 2 zinc finger.

This is Zinc finger C2H2 protein ECU06_1150 from Encephalitozoon cuniculi (strain GB-M1) (Microsporidian parasite).